We begin with the raw amino-acid sequence, 106 residues long: Large ribosomal subunit protein uL23 (106 aa).

Belongs to the universal ribosomal protein uL23 family. Part of the 50S ribosomal subunit. Contacts protein L29, and trigger factor when it is bound to the ribosome.

Its function is as follows. One of the early assembly proteins it binds 23S rRNA. One of the proteins that surrounds the polypeptide exit tunnel on the outside of the ribosome. Forms the main docking site for trigger factor binding to the ribosome. In Acinetobacter baylyi (strain ATCC 33305 / BD413 / ADP1), this protein is Large ribosomal subunit protein uL23.